The following is a 506-amino-acid chain: Anaerobic nitric oxide reductase transcription regulator NorR (506 aa).

Residue D57 is modified to 4-aspartylphosphate. The Sigma-54 factor interaction domain maps to 187 to 416 (MIGLSPAMTQ…LEHAIHRAVV (230 aa)). ATP contacts are provided by residues 215–222 (GETGTGKE) and 278–287 (ADNGTLFLDE). A DNA-binding region (H-T-H motif) is located at residues 481–500 (WAASARALETDVANLHRLAK).

It participates in nitrogen metabolism; nitric oxide reduction. Functionally, required for the expression of anaerobic nitric oxide (NO) reductase, acts as a transcriptional activator for at least the norVW operon. Activation also requires sigma-54. The chain is Anaerobic nitric oxide reductase transcription regulator NorR from Salmonella choleraesuis (strain SC-B67).